Consider the following 227-residue polypeptide: ATP phosphoribosyltransferase (227 aa).

The protein belongs to the ATP phosphoribosyltransferase family. Short subfamily. Heteromultimer composed of HisG and HisZ subunits.

It is found in the cytoplasm. The enzyme catalyses 1-(5-phospho-beta-D-ribosyl)-ATP + diphosphate = 5-phospho-alpha-D-ribose 1-diphosphate + ATP. Its pathway is amino-acid biosynthesis; L-histidine biosynthesis; L-histidine from 5-phospho-alpha-D-ribose 1-diphosphate: step 1/9. Functionally, catalyzes the condensation of ATP and 5-phosphoribose 1-diphosphate to form N'-(5'-phosphoribosyl)-ATP (PR-ATP). Has a crucial role in the pathway because the rate of histidine biosynthesis seems to be controlled primarily by regulation of HisG enzymatic activity. In Rhodospirillum rubrum (strain ATCC 11170 / ATH 1.1.1 / DSM 467 / LMG 4362 / NCIMB 8255 / S1), this protein is ATP phosphoribosyltransferase.